We begin with the raw amino-acid sequence, 443 residues long: Thymidine phosphorylase (443 aa).

This sequence belongs to the thymidine/pyrimidine-nucleoside phosphorylase family. Homodimer.

It carries out the reaction thymidine + phosphate = 2-deoxy-alpha-D-ribose 1-phosphate + thymine. It participates in pyrimidine metabolism; dTMP biosynthesis via salvage pathway; dTMP from thymine: step 1/2. In terms of biological role, the enzymes which catalyze the reversible phosphorolysis of pyrimidine nucleosides are involved in the degradation of these compounds and in their utilization as carbon and energy sources, or in the rescue of pyrimidine bases for nucleotide synthesis. In Aeromonas salmonicida (strain A449), this protein is Thymidine phosphorylase.